Here is a 1224-residue protein sequence, read N- to C-terminus: WD repeat-containing protein 11 (1224 aa).

WD repeat units lie at residues 59–108 (KHKA…AQCE) and 111–154 (EHAK…KLWK). A phosphoserine mark is found at Ser-205 and Ser-209. A WD 3 repeat occupies 354-393 (KTVRPFSMVCCPVNENAAALVVSDGRVMIWELKSAVCNRN). Phosphoserine occurs at positions 402 and 406. 6 WD repeats span residues 471 to 510 (RMCP…LHKE), 566 to 605 (NDES…LLRE), 708 to 745 (GSMG…SRGI), 747 to 787 (THRS…MVSS), 793 to 831 (NVTF…ACFR), and 893 to 940 (SLSN…HSLS).

As to quaternary structure, component of the complex WDR11 composed of C17orf75, FAM91A1 and WDR11; FAM91A1 and WDR11 are required for proper location of the complex. Interacts (via the N-terminal and the central portion of the protein) with EMX1. Interacts with GLI3; the interaction associateS EMX1 with GLI3. Interacts with TBC1D23; this interaction may be indirect and recruits TBC1D23 to AP-1-derived vesicles. In terms of tissue distribution, ubiquitous.

The protein resides in the cytoplasm. It localises to the cytoskeleton. It is found in the cilium basal body. The protein localises to the nucleus. Its subcellular location is the cilium axoneme. The protein resides in the cytoplasmic vesicle. It localises to the golgi apparatus. It is found in the trans-Golgi network. In terms of biological role, involved in the Hedgehog (Hh) signaling pathway, is essential for normal ciliogenesis. Regulates the proteolytic processing of GLI3 and cooperates with the transcription factor EMX1 in the induction of downstream Hh pathway gene expression and gonadotropin-releasing hormone production. WDR11 complex facilitates the tethering of Adaptor protein-1 complex (AP-1)-derived vesicles. WDR11 complex acts together with TBC1D23 to facilitate the golgin-mediated capture of vesicles generated using AP-1. This chain is WD repeat-containing protein 11 (WDR11), found in Homo sapiens (Human).